Reading from the N-terminus, the 673-residue chain is DNA ligase (673 aa).

NAD(+)-binding positions include 38-42, 87-88, and E119; these read DSVYD and SL. K121 acts as the N6-AMP-lysine intermediate in catalysis. The NAD(+) site is built by R142, E179, K296, and K320. Zn(2+)-binding residues include C414, C417, C432, and C438. The region spanning 595 to 673 is the BRCT domain; it reads VVKSEIAGKT…EEAFLKLLKS (79 aa).

The protein belongs to the NAD-dependent DNA ligase family. LigA subfamily. Requires Mg(2+) as cofactor. Mn(2+) is required as a cofactor.

The catalysed reaction is NAD(+) + (deoxyribonucleotide)n-3'-hydroxyl + 5'-phospho-(deoxyribonucleotide)m = (deoxyribonucleotide)n+m + AMP + beta-nicotinamide D-nucleotide.. Its function is as follows. DNA ligase that catalyzes the formation of phosphodiester linkages between 5'-phosphoryl and 3'-hydroxyl groups in double-stranded DNA using NAD as a coenzyme and as the energy source for the reaction. It is essential for DNA replication and repair of damaged DNA. This chain is DNA ligase, found in Coxiella burnetii (strain RSA 493 / Nine Mile phase I).